The sequence spans 516 residues: MYDLITGDSIVSAEAVWDHVTMANRELAFKAGDVIKVLDASNKDWWWGQIDDEEGWFPASFVRLWVNQEDGVEEGPSDVQNGHLDPNSDCLCLGRPLQNRDQMRANVINEIMSTERHYIKHLKDICEGYLKQCRKRRDMFSDEQLKVIFGNIEDIYRFQMGFVRDLEKQYNNDDPHLSEIGPCFLEHQDGFWIYSEYCNNHLDACMELSKLMKDSRYQHFFEACRLLQQMIDIAIDGFLLTPVQKICKYPLQLAELLKYTAQDHSDYRYVAAALAVMRNVTQQINERKRRLENIDKIAQWQASVLDWEGEDILDRSSELIYTGEMAWIYQPYGRNQQRVFFLFDHQMVLCKKDLIRRDILYYKGRIDMDKYEVIDIEDGRDDDFNVSMKNAFKLHNKETEEVHLFFAKKLEEKIRWLRAFREERKMVQEDEKIGFEISENQKRQAAMTVRKASKQKGVNSARSVPPSYPPPQDPLNQGQYLVPDGIAQSQVFEFTEPKRSQSPFWQNFSRLTPFKK.

Residues 8–67 (DSIVSAEAVWDHVTMANRELAFKAGDVIKVLDASNKDWWWGQIDDEEGWFPASFVRLWVN) enclose the SH3 domain. The tract at residues 100–110 (RDQMRANVINE) is interaction with GPHN. The DH domain occupies 103-287 (MRANVINEIM…RNVTQQINER (185 aa)). Residues 318–425 (ELIYTGEMAW…WLRAFREERK (108 aa)) form the PH domain. A disordered region spans residues 450–480 (RKASKQKGVNSARSVPPSYPPPQDPLNQGQY). At serine 502 the chain carries Phosphoserine.

As to quaternary structure, interacts with GPHN. As to expression, detected in embryonic and adult brain.

Its subcellular location is the cytoplasm. It is found in the postsynaptic density. In terms of biological role, acts as a guanine nucleotide exchange factor (GEF) for CDC42. Promotes formation of GPHN clusters. In Mus musculus (Mouse), this protein is Rho guanine nucleotide exchange factor 9 (Arhgef9).